The following is a 250-amino-acid chain: Cell division protein ZapD (250 aa).

Belongs to the ZapD family. As to quaternary structure, interacts with FtsZ.

The protein resides in the cytoplasm. Functionally, cell division factor that enhances FtsZ-ring assembly. Directly interacts with FtsZ and promotes bundling of FtsZ protofilaments, with a reduction in FtsZ GTPase activity. This Pectobacterium atrosepticum (strain SCRI 1043 / ATCC BAA-672) (Erwinia carotovora subsp. atroseptica) protein is Cell division protein ZapD.